A 641-amino-acid polypeptide reads, in one-letter code: ATP-dependent zinc metalloprotease FtsH 2 (641 aa).

The Periplasmic portion of the chain corresponds to 1–100; that stretch reads MLAYYVSVNQ…IDVKVIHNFW (100 aa). The chain crosses the membrane as a helical span at residues 101-121; it reads GQAFLSVLPFLLFILALYFLF. The Cytoplasmic segment spans residues 122–641; sequence RQQIRMAGRG…LLPGLEGAPA (520 aa). 193 to 200 is an ATP binding site; it reads GPPGTGKT. His415 is a Zn(2+) binding site. Glu416 is an active-site residue. Residues His419 and Asp491 each contribute to the Zn(2+) site. A disordered region spans residues 593-641; the sequence is KTGKMTNPPSKNSSPVSNGGEASSTKSPARQEETTKDGGLLPGLEGAPA. Composition is skewed to low complexity over residues 599–610 and 630–641; these read NPPSKNSSPVSN and GGLLPGLEGAPA.

This sequence in the central section; belongs to the AAA ATPase family. In the C-terminal section; belongs to the peptidase M41 family. As to quaternary structure, homohexamer. It depends on Zn(2+) as a cofactor.

Its subcellular location is the cell inner membrane. Acts as a processive, ATP-dependent zinc metallopeptidase for both cytoplasmic and membrane proteins. Plays a role in the quality control of integral membrane proteins. The sequence is that of ATP-dependent zinc metalloprotease FtsH 2 from Methylacidiphilum infernorum (isolate V4) (Methylokorus infernorum (strain V4)).